We begin with the raw amino-acid sequence, 546 residues long: ATP-dependent RNA helicase DBP2 (546 aa).

A disordered region spans residues 1–56; it reads MTYGGRDQQYNKTNYKSRGGDFRGGRNSDRNSYNDRPQGGNYRGGFGGRSNYNQPQ. An omega-N-methylarginine mark is found at Arg-18 and Arg-43. Residues 18–33 show a composition bias toward basic and acidic residues; sequence RGGDFRGGRNSDRNSY. Phosphoserine occurs at positions 88 and 90. A Q motif motif is present at residues 113–141; sequence TTFDEAGFPDYVLNEVKAEGFDKPTGIQC. Residues 144–319 enclose the Helicase ATP-binding domain; the sequence is WPMALSGRDM…ADYLNDPIQV (176 aa). Residue 157 to 164 coordinates ATP; it reads AATGSGKT. A DEAD box motif is present at residues 267 to 270; that stretch reads DEAD. The Helicase C-terminal domain maps to 347 to 494; sequence RLNKYLETAS…NIPPELLKYD (148 aa). Lys-474 is covalently cross-linked (Glycyl lysine isopeptide (Lys-Gly) (interchain with G-Cter in ubiquitin)). The tract at residues 493 to 546 is disordered; it reads YDRRSYGGGHPRYGGGRGGRGGYGRRGGYGGGRGGYGGNRQRDGGWGNRGRSNY. Residues 498–540 are compositionally biased toward gly residues; it reads YGGGHPRYGGGRGGRGGYGRRGGYGGGRGGYGGNRQRDGGWGN. The interval 505–530 is RNA-binding RGG-box; it reads YGGGRGGRGGYGRRGGYGGGRGGYGG. Dimethylated arginine; alternate is present on residues Arg-509, Arg-512, Arg-518, and Arg-525. Omega-N-methylarginine; alternate occurs at positions 509, 512, 518, and 525.

Belongs to the DEAD box helicase family. DDX5/DBP2 subfamily. Interacts with UPF1. Associates with polysomes.

The protein resides in the cytoplasm. It is found in the nucleus. It carries out the reaction ATP + H2O = ADP + phosphate + H(+). Functionally, ATP-dependent RNA helicase involved nonsense-mediated mRNA decay and ribosome biogenesis through rRNA processing. Associates directly with chromatin, correlating with transcriptional activity. Required for assembly of mRNA-binding proteins YRA1, NAB2, and MEX67 onto poly(A)+ RNA. The polypeptide is ATP-dependent RNA helicase DBP2 (Saccharomyces cerevisiae (strain ATCC 204508 / S288c) (Baker's yeast)).